The chain runs to 2217 residues: DNA polymerase epsilon catalytic subunit A (2217 aa).

Residues cysteine 2104, cysteine 2107, cysteine 2126, and cysteine 2129 each coordinate Zn(2+). Residues 2104–2129 (CEYCSYVSDLDLCRDGLDGKFQCPRC) form a CysA-type zinc finger. Residues cysteine 2160, cysteine 2163, cysteine 2175, and cysteine 2177 each contribute to the [4Fe-4S] cluster site. The CysB motif motif lies at 2160-2177 (CEKCHTVKRDLMSTNCNC).

It belongs to the DNA polymerase type-B family. In terms of assembly, heterotetramer. Consists of 4 subunits: POL2, DPB2, DPB3 and DPB4. The cofactor is [4Fe-4S] cluster.

It is found in the nucleus. It carries out the reaction DNA(n) + a 2'-deoxyribonucleoside 5'-triphosphate = DNA(n+1) + diphosphate. Its function is as follows. DNA polymerase II participates in chromosomal DNA replication. This Candida glabrata (strain ATCC 2001 / BCRC 20586 / JCM 3761 / NBRC 0622 / NRRL Y-65 / CBS 138) (Yeast) protein is DNA polymerase epsilon catalytic subunit A (POL2).